The sequence spans 559 residues: MSRPFSSGVYVSRGVALLLAALTAVLLLVLVALASLYGSCAHVQPSEQGNSRVKNTSLWPPGGQEWALPTPAQEPTVGTSQDLGPPSGPWDHLRLPPWLVPLHYDLELWPWLQPDKLSPPNLTFTGRVNITVRCTVASSRLLLHSFLLNYKQVEVWGPLAQDTRNATVGRVQVEKVWFAPDMQFVVLDLGQSLEPGSRYELSFHFSGQVLQVGLEGLFLNLYHDEDELRALVATQMEPTFARHVFPCFDEPALKATFNITVIHHPGYAALSNMPQLGQSERIDVNGSRWTVTTFHTTPRMPTYLVALVVCDLDHISRTERGKEIRVWARKDDIANGYLDFAANITGPIFSFLEDLFNISYRLPKTDIVALPIFASGAMENWGLLIFDESSLLLEPEDELTEKRAMILSIIAHEVGHQWFGNLVTMSWWNNIWLNEGFASYFELELTNYFYPKVPMNMIFFFTVLHGILGEDHALESRAVSTAVENFTETSEINRLFDLYTYKKGACMAWMLASFLSPHLFINALKSYLETFSYSNAEQDDLWRHIQMVIVPFRHFLAEH.

Over 1 to 13 (MSRPFSSGVYVSR) the chain is Cytoplasmic. The chain crosses the membrane as a helical; Signal-anchor for type II membrane protein span at residues 14-34 (GVALLLAALTAVLLLVLVALA). Over 35–559 (SLYGSCAHVQ…VPFRHFLAEH (525 aa)) the chain is Lumenal. N-linked (GlcNAc...) asparagine glycosylation is found at Asn121 and Asn129. Glu237 provides a ligand contact to substrate. Asn258, Asn285, and Asn343 each carry an N-linked (GlcNAc...) asparagine glycan. 376–380 (GAMEN) serves as a coordination point for substrate. His412 serves as a coordination point for Zn(2+). The Proton acceptor role is filled by Glu413. Zn(2+)-binding residues include His416 and Glu435.

Belongs to the peptidase M1 family. Homodimer. The cofactor is Zn(2+). Post-translationally, N-glycosylated.

Its subcellular location is the membrane. Its activity is regulated as follows. Inhibited by bestatin. Its function is as follows. Metalloprotease which may be important for placentation by regulating biological activity of key peptides at the embryo-maternal interface. On synthetic substrates it shows a marked preference for Leu-4-methylcoumaryl-7-amide (Leu-MCA) over Met-MCA, Arg-LCA and Lys-LCA. Cleaves the N-terminal amino acid of several peptides such as angiotensin-3, kisspeptin-10 and endokinin C. This chain is Aminopeptidase Q, found in Mus musculus (Mouse).